The sequence spans 207 residues: Small ribosomal subunit protein uS4 (207 aa).

Residues 31–53 are disordered; it reads KAKFDSKPGQHGRTSGARTSDFG. The S4 RNA-binding domain maps to 97 to 157; the sequence is SRLDNVVYRM…EKSKKQARIV (61 aa).

This sequence belongs to the universal ribosomal protein uS4 family. As to quaternary structure, part of the 30S ribosomal subunit. Contacts protein S5. The interaction surface between S4 and S5 is involved in control of translational fidelity.

One of the primary rRNA binding proteins, it binds directly to 16S rRNA where it nucleates assembly of the body of the 30S subunit. In terms of biological role, with S5 and S12 plays an important role in translational accuracy. The polypeptide is Small ribosomal subunit protein uS4 (Paracidovorax citrulli (strain AAC00-1) (Acidovorax citrulli)).